Consider the following 363-residue polypeptide: Probable butyrate kinase (363 aa).

This sequence belongs to the acetokinase family.

It localises to the cytoplasm. The catalysed reaction is butanoate + ATP = butanoyl phosphate + ADP. The protein is Probable butyrate kinase of Maridesulfovibrio salexigens (strain ATCC 14822 / DSM 2638 / NCIMB 8403 / VKM B-1763) (Desulfovibrio salexigens).